The following is a 480-amino-acid chain: Phosphoglucosamine mutase (480 aa).

The disordered stretch occupies residues 1–41 (MPKHTKKDPREGAPSATGEPQKQAAGRKLFGTDGVRGVANQ). The active-site Phosphoserine intermediate is the serine 127. Serine 127, aspartate 269, aspartate 271, and aspartate 273 together coordinate Mg(2+). Serine 127 carries the post-translational modification Phosphoserine.

This sequence belongs to the phosphohexose mutase family. The cofactor is Mg(2+). Activated by phosphorylation.

The enzyme catalyses alpha-D-glucosamine 1-phosphate = D-glucosamine 6-phosphate. In terms of biological role, catalyzes the conversion of glucosamine-6-phosphate to glucosamine-1-phosphate. The chain is Phosphoglucosamine mutase from Sorangium cellulosum (strain So ce56) (Polyangium cellulosum (strain So ce56)).